A 31-amino-acid chain; its full sequence is ARRRRSSSRPIRRRRPRRRTTRRRRAGRRRR.

A disordered region spans residues 1–31; that stretch reads ARRRRSSSRPIRRRRPRRRTTRRRRAGRRRR.

In terms of tissue distribution, testis.

The protein resides in the nucleus. It is found in the chromosome. In terms of biological role, protamines substitute for histones in the chromatin of sperm during the haploid phase of spermatogenesis. They compact sperm DNA into a highly condensed, stable and inactive complex. This Clupea harengus (Atlantic herring) protein is Protamine-YI.